Reading from the N-terminus, the 1286-residue chain is Structural maintenance of chromosomes protein 4 (1286 aa).

Residues 1–51 (MRRKGTKPSTACHQEEGPPPSQDGAHSDEEMEQPAGEAESAAPAKPPGEEL) form a disordered region. Residues Ser-21, Ser-27, and Ser-40 each carry the phosphoserine modification. 111–118 (GPNGSGKS) contacts ATP. Residue Ser-141 is modified to Phosphoserine. The stretch at 270–589 (RRVEILNEHR…KVEEAKSSLA (320 aa)) forms a coiled coil. An N6-acetyllysine mark is found at Lys-379 and Lys-677. The 115-residue stretch at 611-725 (PGIYGRLGDL…ANNLDQATRV (115 aa)) folds into the SMC hinge domain. Coiled coils occupy residues 768–1018 (EISV…KLEQ) and 1068–1133 (ESIT…LNEF). Position 980 is a phosphoserine (Ser-980).

The protein belongs to the SMC family. SMC4 subfamily. Forms a heterodimer with SMC2. Component of the condensin complex, which contains the SMC2 and SMC4 heterodimer, and three non SMC subunits that probably regulate the complex: BRRN1/CAPH, CNAP1/CAPD2 and CAPG.

It is found in the nucleus. The protein localises to the cytoplasm. It localises to the chromosome. Its function is as follows. Central component of the condensin complex, a complex required for conversion of interphase chromatin into mitotic-like condense chromosomes. The condensin complex probably introduces positive supercoils into relaxed DNA in the presence of type I topoisomerases and converts nicked DNA into positive knotted forms in the presence of type II topoisomerases. In Mus musculus (Mouse), this protein is Structural maintenance of chromosomes protein 4 (Smc4).